The chain runs to 592 residues: ATP-dependent RNA helicase DBP3 (592 aa).

The segment at 1–146 (MGKRPIEDDA…AGSYTEHTEL (146 aa)) is disordered. Residues 19 to 31 (KKSKKEKSGKSKK) are compositionally biased toward basic residues. The segment covering 73–82 (EAKEASKAGK) has biased composition (basic and acidic residues). Basic residues predominate over residues 97–108 (AARKAARKAEKK). Residues 116–141 (TASSAPTEASSVPAQTLSSSNAGSYT) are compositionally biased toward polar residues. A Q motif motif is present at residues 179-206 (VNFKYLPVTDESQRAPFAGFTAPTPIQA). Residues 209–382 (WPFLLSGRDM…STFMVSPVRI (174 aa)) enclose the Helicase ATP-binding domain. 222–229 (AETGSGKT) is a binding site for ATP. The DEAD box signature appears at 330-333 (DEAD). The 150-residue stretch at 413–562 (RLLQLLKQYQ…EVPEELLKFG (150 aa)) folds into the Helicase C-terminal domain.

It belongs to the DEAD box helicase family. DDX5/DBP2 subfamily.

The protein localises to the nucleus. The protein resides in the nucleolus. The enzyme catalyses ATP + H2O = ADP + phosphate + H(+). In terms of biological role, ATP-dependent RNA helicase required for 60S ribosomal subunit synthesis. Involved in efficient pre-rRNA processing, predominantly at site A3, which is necessary for the normal formation of 25S and 5.8S rRNAs. The chain is ATP-dependent RNA helicase DBP3 (DBP3) from Phaeosphaeria nodorum (strain SN15 / ATCC MYA-4574 / FGSC 10173) (Glume blotch fungus).